The following is a 1479-amino-acid chain: ESX secretion system protein EccC (1479 aa).

The Cytoplasmic segment spans residues 1 to 235; it reads MSQLWVLYET…SQEGDGDPRG (235 aa). Residues 236 to 256 traverse the membrane as a helical segment; it reads LWLMVLPPVMMLLVIGAVALI. The Extracellular portion of the chain corresponds to 257–259; that stretch reads QPR. A helical membrane pass occupies residues 260-280; sequence GVFIMISIAMFATTIVTSTAQ. At 281–1479 the chain is on the cytoplasmic side; sequence YMREKKARQM…DQKIQIPKVE (1199 aa). Positions 291–321 form a coiled coil; it reads RKEKRRRIYTNYLEQKREELQALSEKQRNVL. 2 FtsK domains span residues 652–848 and 984–1168; these read NDVV…NDSK and QSDY…SEKF. Residue 672–679 participates in ATP binding; it reads GTTGSGKS. Glu-785 is a catalytic residue. ATP-binding positions include 1004 to 1009, Asn-1036, Asp-1105, Ile-1197, Asp-1206, 1287 to 1291, and Ile-1475; these read GYGKST and RKGKT. The 178-residue stretch at 1267-1444 folds into the FtsK 3 domain; the sequence is VRPVAINMRT…ILVTKKSEQS (178 aa).

As to quaternary structure, whole protein oligomerizes in native gels. Part of the ESX / type VII secretion system (T7SS), which is composed of cytosolic and membrane components. The ESX membrane complex is composed of EccB, EccC and EccD.

It localises to the cell membrane. Its activity is regulated as follows. EsxB binding to the third FtsK domain causes multimerization; a subsequent unknown step relieves the allosteric inhibition of linker 2 on FtsK domain 1, activating the ATPase activity. Its function is as follows. Part of the ESX specialized secretion system, which exports proteins from the cell including EsxA (ESAT-6) and EsxB (CFP-10). Might be the translocase subunit. Probably only the first FtsK domain can hydrolyze ATP. This Geobacillus thermodenitrificans (strain NG80-2) protein is ESX secretion system protein EccC.